A 594-amino-acid chain; its full sequence is UvrABC system protein C (594 aa).

One can recognise a GIY-YIG domain in the interval aspartate 14–isoleucine 91. The UVR domain maps to lysine 196 to isoleucine 231.

Belongs to the UvrC family. As to quaternary structure, interacts with UvrB in an incision complex.

The protein resides in the cytoplasm. The UvrABC repair system catalyzes the recognition and processing of DNA lesions. UvrC both incises the 5' and 3' sides of the lesion. The N-terminal half is responsible for the 3' incision and the C-terminal half is responsible for the 5' incision. The protein is UvrABC system protein C of Bacillus cereus (strain B4264).